We begin with the raw amino-acid sequence, 164 residues long: NADH-quinone oxidoreductase subunit I (164 aa).

4Fe-4S ferredoxin-type domains lie at 54–84 (LRRY…IEAG) and 95–124 (VRYD…EGPN). Residues cysteine 64, cysteine 67, cysteine 70, cysteine 74, cysteine 104, cysteine 107, cysteine 110, and cysteine 114 each coordinate [4Fe-4S] cluster.

It belongs to the complex I 23 kDa subunit family. As to quaternary structure, NDH-1 is composed of 14 different subunits. Subunits NuoA, H, J, K, L, M, N constitute the membrane sector of the complex. [4Fe-4S] cluster serves as cofactor.

It is found in the cell inner membrane. The enzyme catalyses a quinone + NADH + 5 H(+)(in) = a quinol + NAD(+) + 4 H(+)(out). In terms of biological role, NDH-1 shuttles electrons from NADH, via FMN and iron-sulfur (Fe-S) centers, to quinones in the respiratory chain. The immediate electron acceptor for the enzyme in this species is believed to be ubiquinone. Couples the redox reaction to proton translocation (for every two electrons transferred, four hydrogen ions are translocated across the cytoplasmic membrane), and thus conserves the redox energy in a proton gradient. The sequence is that of NADH-quinone oxidoreductase subunit I from Mesorhizobium japonicum (strain LMG 29417 / CECT 9101 / MAFF 303099) (Mesorhizobium loti (strain MAFF 303099)).